We begin with the raw amino-acid sequence, 234 residues long: Uridylate kinase (234 aa).

Position 9–12 (9–12) interacts with ATP; the sequence is KLSG. Glycine 51 serves as a coordination point for UMP. Residues glycine 52 and arginine 56 each coordinate ATP. Residues aspartate 71 and 132 to 139 contribute to the UMP site; that span reads CGNPFFTT. ATP-binding residues include threonine 159, tyrosine 165, and aspartate 168.

The protein belongs to the UMP kinase family. As to quaternary structure, homohexamer.

It localises to the cytoplasm. It catalyses the reaction UMP + ATP = UDP + ADP. It functions in the pathway pyrimidine metabolism; CTP biosynthesis via de novo pathway; UDP from UMP (UMPK route): step 1/1. Inhibited by UTP. In terms of biological role, catalyzes the reversible phosphorylation of UMP to UDP. The polypeptide is Uridylate kinase (Prochlorococcus marinus subsp. pastoris (strain CCMP1986 / NIES-2087 / MED4)).